The chain runs to 182 residues: Interferon beta (182 aa).

The signal sequence occupies residues 1–21 (MNNRWILHAAFLLCFSTTALS). Tyrosine 24 carries the phosphotyrosine modification. Residues asparagine 50, asparagine 90, and asparagine 97 are each glycosylated (N-linked (GlcNAc...) asparagine).

This sequence belongs to the alpha/beta interferon family. As to quaternary structure, monomer. Post-translationally, this beta interferon does not have a disulfide bond.

It is found in the secreted. In terms of biological role, type I interferon cytokine that plays a key role in the innate immune response to infection, developing tumors and other inflammatory stimuli. Signals via binding to high-affinity (IFNAR2) and low-affinity (IFNAR1) heterodimeric receptor, activating the canonical Jak-STAT signaling pathway resulting in transcriptional activation or repression of interferon-regulated genes that encode the effectors of the interferon response, such as antiviral proteins, regulators of cell proliferation and differentiation, and immunoregulatory proteins. Signals mostly via binding to a IFNAR1-IFNAR2 heterodimeric receptor, but can also function with IFNAR1 alone and independently of Jak-STAT pathways. Elicits a wide variety of responses, including antiviral and antibacterial activities, and can regulate the development of B-cells, myelopoiesis and lipopolysaccharide (LPS)-inducible production of tumor necrosis factor. Plays a role in neuronal homeostasis by regulating dopamine turnover and protecting dopaminergic neurons: acts by promoting neuronal autophagy and alpha-synuclein clearance, thereby preventing dopaminergic neuron loss. IFNB1 is more potent than interferon-alpha (IFN-alpha) in inducing the apoptotic and antiproliferative pathways required for control of tumor cell growth. This is Interferon beta from Mus musculus (Mouse).